A 207-amino-acid chain; its full sequence is Thymidylate kinase (207 aa).

An ATP-binding site is contributed by 10–17; sequence GIEGSGKS.

This sequence belongs to the thymidylate kinase family.

The catalysed reaction is dTMP + ATP = dTDP + ADP. Functionally, phosphorylation of dTMP to form dTDP in both de novo and salvage pathways of dTTP synthesis. This is Thymidylate kinase from Halothermothrix orenii (strain H 168 / OCM 544 / DSM 9562).